Consider the following 263-residue polypeptide: Protein IQ-DOMAIN 9 (263 aa).

The segment at 16-41 (SKQGTEKKKTSAVKPKKGSKKKGTSL) is disordered. The short motif at 21-28 (EKKKTSAV) is the Nuclear localization signal 1 element. Residues 25 to 38 (TSAVKPKKGSKKKG) show a composition bias toward basic residues. The IQ domain maps to 46–75 (EDWAATRIQTAFKAYKARKSLRRLKGIARA). A calmodulin-binding region spans residues 59–78 (AYKARKSLRRLKGIARAKLS). The short motif at 107–114 (ARRVCMVT) is the Nuclear localization signal 2 element. The interval 216 to 263 (TPKKPKSSKTDSNSPAKRTVSLSSVPAKTPFPGARNTVKPRRLSFPGA) is disordered. Residues 226 to 241 (DSNSPAKRTVSLSSVP) show a composition bias toward polar residues.

This sequence belongs to the IQD family. Binds to multiple calmodulin (CaM) in the presence of Ca(2+) and CaM-like proteins.

The protein localises to the nucleus. It is found in the nuclear body. Functionally, may be involved in cooperative interactions with calmodulins or calmodulin-like proteins. Recruits calmodulin proteins to microtubules, thus being a potential scaffold in cellular signaling and trafficking. May associate with nucleic acids and regulate gene expression at the transcriptional or post-transcriptional level. This Arabidopsis thaliana (Mouse-ear cress) protein is Protein IQ-DOMAIN 9.